The sequence spans 443 residues: 26S proteasome regulatory subunit rpn501 (443 aa).

Residue Ser-209 is modified to Phosphoserine. Residues 230-402 (DVCKYYRAVY…QVISFKKSQN (173 aa)) form the PCI domain.

It belongs to the proteasome subunit p55 family.

It is found in the nucleus. In terms of biological role, acts as a regulatory subunit of the 26S proteasome which is involved in the ATP-dependent degradation of ubiquitinated proteins. Required for proper proteasome assembly. This is 26S proteasome regulatory subunit rpn501 (rpn501) from Schizosaccharomyces pombe (strain 972 / ATCC 24843) (Fission yeast).